The chain runs to 201 residues: Recombination protein RecR (201 aa).

Residues 57-72 (CQQCRNFTEEALCEIC) form a C4-type zinc finger. Positions 81–176 (TTLCIVETPG…NISRIAHGVP (96 aa)) constitute a Toprim domain.

The protein belongs to the RecR family.

In terms of biological role, may play a role in DNA repair. It seems to be involved in an RecBC-independent recombinational process of DNA repair. It may act with RecF and RecO. This Colwellia psychrerythraea (strain 34H / ATCC BAA-681) (Vibrio psychroerythus) protein is Recombination protein RecR.